A 331-amino-acid chain; its full sequence is Holliday junction branch migration complex subunit RuvB (331 aa).

Residues 1-182 form a large ATPase domain (RuvB-L) region; it reads MSNDTLHKYE…FGIPLHLEFY (182 aa). Residues L21, R22, G63, K66, T67, T68, 129 to 131, R172, Y182, and R219 contribute to the ATP site; that span reads EDY. T67 is a binding site for Mg(2+). Positions 183-254 are small ATPAse domain (RuvB-S); sequence SVDELVLVIK…FANSALFRLG (72 aa). A head domain (RuvB-H) region spans residues 257–331; that stretch reads GAGFDKMDLK…FEYLLSSKYI (75 aa). R310 and R315 together coordinate DNA.

The protein belongs to the RuvB family. Homohexamer. Forms an RuvA(8)-RuvB(12)-Holliday junction (HJ) complex. HJ DNA is sandwiched between 2 RuvA tetramers; dsDNA enters through RuvA and exits via RuvB. An RuvB hexamer assembles on each DNA strand where it exits the tetramer. Each RuvB hexamer is contacted by two RuvA subunits (via domain III) on 2 adjacent RuvB subunits; this complex drives branch migration. In the full resolvosome a probable DNA-RuvA(4)-RuvB(12)-RuvC(2) complex forms which resolves the HJ.

It localises to the cytoplasm. The enzyme catalyses ATP + H2O = ADP + phosphate + H(+). Functionally, the RuvA-RuvB-RuvC complex processes Holliday junction (HJ) DNA during genetic recombination and DNA repair, while the RuvA-RuvB complex plays an important role in the rescue of blocked DNA replication forks via replication fork reversal (RFR). RuvA specifically binds to HJ cruciform DNA, conferring on it an open structure. The RuvB hexamer acts as an ATP-dependent pump, pulling dsDNA into and through the RuvAB complex. RuvB forms 2 homohexamers on either side of HJ DNA bound by 1 or 2 RuvA tetramers; 4 subunits per hexamer contact DNA at a time. Coordinated motions by a converter formed by DNA-disengaged RuvB subunits stimulates ATP hydrolysis and nucleotide exchange. Immobilization of the converter enables RuvB to convert the ATP-contained energy into a lever motion, pulling 2 nucleotides of DNA out of the RuvA tetramer per ATP hydrolyzed, thus driving DNA branch migration. The RuvB motors rotate together with the DNA substrate, which together with the progressing nucleotide cycle form the mechanistic basis for DNA recombination by continuous HJ branch migration. Branch migration allows RuvC to scan DNA until it finds its consensus sequence, where it cleaves and resolves cruciform DNA. The chain is Holliday junction branch migration complex subunit RuvB from Anaplasma marginale (strain Florida).